Here is a 293-residue protein sequence, read N- to C-terminus: Elongation factor Ts (293 aa).

The segment at 80–83 is involved in Mg(2+) ion dislocation from EF-Tu; the sequence is TDFV.

This sequence belongs to the EF-Ts family.

It localises to the cytoplasm. In terms of biological role, associates with the EF-Tu.GDP complex and induces the exchange of GDP to GTP. It remains bound to the aminoacyl-tRNA.EF-Tu.GTP complex up to the GTP hydrolysis stage on the ribosome. This Staphylococcus aureus (strain Newman) protein is Elongation factor Ts.